The following is a 357-amino-acid chain: UDP-N-acetylglucosamine--N-acetylmuramyl-(pentapeptide) pyrophosphoryl-undecaprenol N-acetylglucosamine transferase (357 aa).

UDP-N-acetyl-alpha-D-glucosamine is bound by residues 13-15 (TGG), N125, R161, S189, I243, and Q288.

Belongs to the glycosyltransferase 28 family. MurG subfamily.

Its subcellular location is the cell inner membrane. The catalysed reaction is di-trans,octa-cis-undecaprenyl diphospho-N-acetyl-alpha-D-muramoyl-L-alanyl-D-glutamyl-meso-2,6-diaminopimeloyl-D-alanyl-D-alanine + UDP-N-acetyl-alpha-D-glucosamine = di-trans,octa-cis-undecaprenyl diphospho-[N-acetyl-alpha-D-glucosaminyl-(1-&gt;4)]-N-acetyl-alpha-D-muramoyl-L-alanyl-D-glutamyl-meso-2,6-diaminopimeloyl-D-alanyl-D-alanine + UDP + H(+). Its pathway is cell wall biogenesis; peptidoglycan biosynthesis. In terms of biological role, cell wall formation. Catalyzes the transfer of a GlcNAc subunit on undecaprenyl-pyrophosphoryl-MurNAc-pentapeptide (lipid intermediate I) to form undecaprenyl-pyrophosphoryl-MurNAc-(pentapeptide)GlcNAc (lipid intermediate II). The sequence is that of UDP-N-acetylglucosamine--N-acetylmuramyl-(pentapeptide) pyrophosphoryl-undecaprenol N-acetylglucosamine transferase from Bordetella pertussis (strain Tohama I / ATCC BAA-589 / NCTC 13251).